The chain runs to 193 residues: Peptidyl-tRNA hydrolase (193 aa).

Tyrosine 15 contributes to the tRNA binding site. The active-site Proton acceptor is the histidine 20. Phenylalanine 65, asparagine 67, and asparagine 113 together coordinate tRNA.

It belongs to the PTH family. Monomer.

Its subcellular location is the cytoplasm. The enzyme catalyses an N-acyl-L-alpha-aminoacyl-tRNA + H2O = an N-acyl-L-amino acid + a tRNA + H(+). Its function is as follows. Hydrolyzes ribosome-free peptidyl-tRNAs (with 1 or more amino acids incorporated), which drop off the ribosome during protein synthesis, or as a result of ribosome stalling. Functionally, catalyzes the release of premature peptidyl moieties from peptidyl-tRNA molecules trapped in stalled 50S ribosomal subunits, and thus maintains levels of free tRNAs and 50S ribosomes. In Ehrlichia canis (strain Jake), this protein is Peptidyl-tRNA hydrolase.